Here is a 1414-residue protein sequence, read N- to C-terminus: DNA-directed RNA polymerase subunit beta' (1414 aa).

Residues C70, C72, C85, and C88 each contribute to the Zn(2+) site. Mg(2+)-binding residues include D461, D463, and D465. C820, C894, C901, and C904 together coordinate Zn(2+).

This sequence belongs to the RNA polymerase beta' chain family. In terms of assembly, the RNAP catalytic core consists of 2 alpha, 1 beta, 1 beta' and 1 omega subunit. When a sigma factor is associated with the core the holoenzyme is formed, which can initiate transcription. It depends on Mg(2+) as a cofactor. Requires Zn(2+) as cofactor.

The enzyme catalyses RNA(n) + a ribonucleoside 5'-triphosphate = RNA(n+1) + diphosphate. Functionally, DNA-dependent RNA polymerase catalyzes the transcription of DNA into RNA using the four ribonucleoside triphosphates as substrates. This chain is DNA-directed RNA polymerase subunit beta', found in Cupriavidus taiwanensis (strain DSM 17343 / BCRC 17206 / CCUG 44338 / CIP 107171 / LMG 19424 / R1) (Ralstonia taiwanensis (strain LMG 19424)).